Reading from the N-terminus, the 75-residue chain is Protein SlyX homolog (75 aa).

This sequence belongs to the SlyX family.

In Vibrio atlanticus (strain LGP32) (Vibrio splendidus (strain Mel32)), this protein is Protein SlyX homolog.